Here is a 750-residue protein sequence, read N- to C-terminus: Phosphoribosylformylglycinamidine synthase subunit PurL (750 aa).

Histidine 54 is an active-site residue. 2 residues coordinate ATP: tyrosine 57 and lysine 101. Position 103 (glutamate 103) interacts with Mg(2+). Residues 104-107 and arginine 126 each bind substrate; that span reads SHNH. Histidine 105 serves as the catalytic Proton acceptor. Aspartate 127 is a binding site for Mg(2+). Glutamine 251 is a substrate binding site. Aspartate 279 contacts Mg(2+). Residue 323 to 325 coordinates substrate; that stretch reads ESQ. ATP-binding residues include aspartate 509 and glycine 546. Asparagine 547 provides a ligand contact to Mg(2+). Substrate is bound at residue serine 549.

This sequence belongs to the FGAMS family. As to quaternary structure, monomer. Part of the FGAM synthase complex composed of 1 PurL, 1 PurQ and 2 PurS subunits.

Its subcellular location is the cytoplasm. It catalyses the reaction N(2)-formyl-N(1)-(5-phospho-beta-D-ribosyl)glycinamide + L-glutamine + ATP + H2O = 2-formamido-N(1)-(5-O-phospho-beta-D-ribosyl)acetamidine + L-glutamate + ADP + phosphate + H(+). The protein operates within purine metabolism; IMP biosynthesis via de novo pathway; 5-amino-1-(5-phospho-D-ribosyl)imidazole from N(2)-formyl-N(1)-(5-phospho-D-ribosyl)glycinamide: step 1/2. In terms of biological role, part of the phosphoribosylformylglycinamidine synthase complex involved in the purines biosynthetic pathway. Catalyzes the ATP-dependent conversion of formylglycinamide ribonucleotide (FGAR) and glutamine to yield formylglycinamidine ribonucleotide (FGAM) and glutamate. The FGAM synthase complex is composed of three subunits. PurQ produces an ammonia molecule by converting glutamine to glutamate. PurL transfers the ammonia molecule to FGAR to form FGAM in an ATP-dependent manner. PurS interacts with PurQ and PurL and is thought to assist in the transfer of the ammonia molecule from PurQ to PurL. The sequence is that of Phosphoribosylformylglycinamidine synthase subunit PurL from Cutibacterium acnes (strain DSM 16379 / KPA171202) (Propionibacterium acnes).